We begin with the raw amino-acid sequence, 88 residues long: ATPase inhibitor mai-1, mitochondrial (88 aa).

Over residues 1-18 the composition is skewed to gly residues; sequence MSGSGSGSGAGHGGGSGG. The tract at residues 1 to 41 is disordered; that stretch reads MSGSGSGSGAGHGGGSGGSIREAGGSLGMMGATREEEYFRR. The stretch at 39 to 87 forms a coiled coil; that stretch reads FRRQQKDQLDNLKKKLEADMTQSQQEIRDHEKVLEQHQQRLKEIEKGHG.

This sequence belongs to the ATPase inhibitor family. Post-translationally, does not seem to include a transit peptide.

It localises to the mitochondrion. Functionally, thought to be a regulatory component of the ATP-synthesizing complex in the mitochondria. The chain is ATPase inhibitor mai-1, mitochondrial (mai-1) from Caenorhabditis elegans.